Reading from the N-terminus, the 601-residue chain is Probable HECT-type ubiquitin ligase-interacting protein creD (601 aa).

2 disordered regions span residues 374 to 397 (EVDPSGYRTPGPGSGPGTPFGTLS) and 454 to 496 (VSTD…GMAT). Residues 455 to 473 (STDSFGPSSGSNSQSPASP) show a composition bias toward low complexity. The segment covering 475-489 (LSRRPSDEGYHDHDY) has biased composition (basic and acidic residues).

It belongs to the arrestin family. In terms of assembly, interacts with hulA.

Its function is as follows. Component of the regulatory network controlling carbon source utilization through ubiquitination and deubiquitination involving creA, creB, creC, creD and acrB. May be involved in signaling by recognizing appropriately phosphorylated substrates via its arrestin domains and then recruit a HECT-type ubiquitin ligase such as hulA, leading to ubiquitination of the substrate, providing a link between ubiquitination and phosphorylation in protein regulation and stability. The chain is Probable HECT-type ubiquitin ligase-interacting protein creD (creD) from Aspergillus fumigatus (strain CBS 144.89 / FGSC A1163 / CEA10) (Neosartorya fumigata).